The sequence spans 670 residues: DNA ligase (670 aa).

Residues Asp34–Asp38, Ser83–Leu84, and Glu113 each bind NAD(+). Catalysis depends on Lys115, which acts as the N6-AMP-lysine intermediate. NAD(+)-binding residues include Arg136, Glu173, Lys288, and Lys312. Zn(2+)-binding residues include Cys406, Cys409, Cys424, and Cys430. Residues Pro591–Ser670 form the BRCT domain.

Belongs to the NAD-dependent DNA ligase family. LigA subfamily. It depends on Mg(2+) as a cofactor. Mn(2+) is required as a cofactor.

It carries out the reaction NAD(+) + (deoxyribonucleotide)n-3'-hydroxyl + 5'-phospho-(deoxyribonucleotide)m = (deoxyribonucleotide)n+m + AMP + beta-nicotinamide D-nucleotide.. Functionally, DNA ligase that catalyzes the formation of phosphodiester linkages between 5'-phosphoryl and 3'-hydroxyl groups in double-stranded DNA using NAD as a coenzyme and as the energy source for the reaction. It is essential for DNA replication and repair of damaged DNA. This chain is DNA ligase, found in Cytophaga hutchinsonii (strain ATCC 33406 / DSM 1761 / CIP 103989 / NBRC 15051 / NCIMB 9469 / D465).